The sequence spans 950 residues: Oxysterol-binding protein-related protein 1 (950 aa).

An interaction with RAB7A region spans residues 1–237 (MNTEAEQQLL…NKVVHKALKR (237 aa)). 3 ANK repeats span residues 47 to 76 (LGWT…KVNM), 80 to 109 (MGDT…DTTV), and 175 to 204 (LGNT…DPSL). Residues 235–334 (LKRFEGPLWK…WLEAIEEHSA (100 aa)) enclose the PH domain. Residues 430–463 (NFKLEQEQEKNKILSEALETLATEHHELERSLVE) adopt a coiled-coil conformation. The FFAT signature appears at 469–483 (SILSEDEFYDALSGS). 2 disordered regions span residues 795 to 821 (KKNT…VPDS) and 881 to 913 (MENG…SEED). Positions 877–913 (DIRAMENGEIDQASEEKKRLEEKQRAARKNRSKSEED) form a coiled coil. A compositionally biased stretch (basic and acidic residues) spans 890-901 (SEEKKRLEEKQR).

It belongs to the OSBP family. In terms of assembly, interacts (via FFAT motif) with VAPA. Interacts (via FFAT motif) with VAPB. Interacts with the GTP-bound form of RAB7A. Interacts with OAS1B. Interacts (via FFAT motif) with MOSPD2 (via MSP domain). In terms of tissue distribution, detected in prostate and liver.

Its subcellular location is the late endosome. Its function is as follows. Binds phospholipids; exhibits strong binding to phosphatidic acid and weak binding to phosphatidylinositol 3-phosphate. Stabilizes GTP-bound RAB7A on late endosomes/lysosomes and alters functional properties of late endocytic compartments via its interaction with RAB7A. Binds 25-hydroxycholesterol and cholesterol. The polypeptide is Oxysterol-binding protein-related protein 1 (Rattus norvegicus (Rat)).